A 213-amino-acid polypeptide reads, in one-letter code: 5-methylthioribulose-1-phosphate/5-deoxyribulose-1-phosphate aldolase (213 aa).

Catalysis depends on Glu-73, which acts as the Proton donor/acceptor. Co(2+)-binding residues include Glu-73, His-92, His-94, and His-155.

Belongs to the aldolase class II family. It depends on Co(2+) as a cofactor.

The enzyme catalyses 5-(methylsulfanyl)-D-ribulose 1-phosphate = 2-(methylsulfanyl)acetaldehyde + dihydroxyacetone phosphate. It catalyses the reaction 5-deoxy-D-ribulose 1-phosphate = dihydroxyacetone phosphate + acetaldehyde. It participates in amino-acid biosynthesis; L-methionine biosynthesis via salvage pathway. Uses 5-methylthioribulose-1-phosphate to yield 2-(methylthio)acetaldehyde and dihydroxyacetone phosphate. Can also use 5-deoxyribulose 1-phosphate to yield acetaldehyde and dihydroxyacetone phosphate. Part of a bifunctional DHAP-shunt salvage pathway for SAM by-products. The chain is 5-methylthioribulose-1-phosphate/5-deoxyribulose-1-phosphate aldolase from Escherichia coli O45:K1 (strain S88 / ExPEC).